Reading from the N-terminus, the 428-residue chain is Serine--tRNA ligase (428 aa).

Residue 231 to 233 (TAE) participates in L-serine binding. Position 262 to 264 (262 to 264 (RSE)) interacts with ATP. E285 is an L-serine binding site. 349–352 (EISS) serves as a coordination point for ATP. S385 provides a ligand contact to L-serine.

The protein belongs to the class-II aminoacyl-tRNA synthetase family. Type-1 seryl-tRNA synthetase subfamily. As to quaternary structure, homodimer. The tRNA molecule binds across the dimer.

The protein resides in the cytoplasm. It carries out the reaction tRNA(Ser) + L-serine + ATP = L-seryl-tRNA(Ser) + AMP + diphosphate + H(+). The catalysed reaction is tRNA(Sec) + L-serine + ATP = L-seryl-tRNA(Sec) + AMP + diphosphate + H(+). It participates in aminoacyl-tRNA biosynthesis; selenocysteinyl-tRNA(Sec) biosynthesis; L-seryl-tRNA(Sec) from L-serine and tRNA(Sec): step 1/1. Functionally, catalyzes the attachment of serine to tRNA(Ser). Is also able to aminoacylate tRNA(Sec) with serine, to form the misacylated tRNA L-seryl-tRNA(Sec), which will be further converted into selenocysteinyl-tRNA(Sec). The polypeptide is Serine--tRNA ligase (Staphylococcus aureus (strain MW2)).